Reading from the N-terminus, the 213-residue chain is AN1-type zinc finger protein 5 (213 aa).

An A20-type zinc finger spans residues 8-42 (TPGPMLCSTGCGFYGNPRTNGMCSVCYKEHLQRQQ). The Zn(2+) site is built by Cys-14, Cys-18, Cys-30, and Cys-33. The interval 39 to 149 (QRQQNSGRMS…EEKAPELPKP (111 aa)) is disordered. The segment covering 40–75 (RQQNSGRMSPMGTASGSNSPTSDSASVQRADTSLNN) has biased composition (polar residues). Residues Ser-48 and Ser-58 each carry the phosphoserine modification. The span at 120 to 138 (SEPVVTQPSPSVSQPSTSQ) shows a compositional bias: low complexity. Residues 139–148 (SEEKAPELPK) show a composition bias toward basic and acidic residues. The segment at 148-194 (KPKKNRCFMCRKKVGLTGFDCRCGNLFCGLHRYSDKHNCPYDYKAEA) adopts an AN1-type zinc-finger fold. The Zn(2+) site is built by Cys-154, Cys-157, Cys-168, Cys-170, Cys-175, His-178, His-184, and Cys-186. Lys-209 carries the N6-acetyllysine modification.

As to quaternary structure, interacts with ubiquitin and polyubiquitinated proteins. Identified in a heterotrimeric complex with ubiquitin and SQSTM1, where ZFAND5 and SQSTM1 both interact with the same ubiquitin molecule. Homooligomer and/or heterooligomer. Interacts (via A20-type domain) with IKBKG and RIPK1 and with TRAF6 (via AN1-type domain). In terms of tissue distribution, highly expressed in skeletal muscle. Expressed in fetal cochlea. Also expressed in infant brain, fetal heart, pancreatic islet, melanocyte, pineal gland, placenta, corneal stroma, and parathyroid tumor. Weakly expressed or undetectable in adult brain, heart, colon, thymus, spleen, kidney, liver, small intestine, placenta, lung and peripheral blood leukocytes. Expressed in rhabdomyosarcoma RD cells (at protein level).

The protein resides in the cytoplasm. Involved in protein degradation via the ubiquitin-proteasome system. May act by anchoring ubiquitinated proteins to the proteasome. Plays a role in ubiquitin-mediated protein degradation during muscle atrophy. Plays a role in the regulation of NF-kappa-B activation and apoptosis. Inhibits NF-kappa-B activation triggered by overexpression of RIPK1 and TRAF6 but not of RELA. Also inhibits tumor necrosis factor (TNF), IL-1 and TLR4-induced NF-kappa-B activation in a dose-dependent manner. Overexpression sensitizes cells to TNF-induced apoptosis. Is a potent inhibitory factor for osteoclast differentiation. The sequence is that of AN1-type zinc finger protein 5 (ZFAND5) from Homo sapiens (Human).